Here is a 526-residue protein sequence, read N- to C-terminus: Histone-lysine N-methyltransferase SET5 (526 aa).

Residues 112–403 (AKVEVKFIDD…KGEQIRITYV (292 aa)) enclose the SET domain. The interval 450 to 492 (NLGVEKIDSNDNSEDGSKKSTGNRKSSMREAQPDLKEILKNGK) is disordered. The segment covering 476–492 (SMREAQPDLKEILKNGK) has biased composition (basic and acidic residues). A Phosphoserine modification is found at serine 517.

This sequence belongs to the class V-like SAM-binding methyltransferase superfamily. Histone-lysine methyltransferase family. SET5 subfamily.

Its subcellular location is the nucleus. It is found in the chromosome. The protein localises to the cytoplasm. It carries out the reaction L-lysyl-[histone] + S-adenosyl-L-methionine = N(6)-methyl-L-lysyl-[histone] + S-adenosyl-L-homocysteine + H(+). Histone methyltransferase that monomethylates 'Lys-5', 'Lys-8' and 'Lys-12' of histone H4 (H4K5me1, H4K8me1 and H4K12me1, respectively), thereby controlling gene expression and remodeling chromatin structures. The polypeptide is Histone-lysine N-methyltransferase SET5 (SET5) (Saccharomyces cerevisiae (strain YJM789) (Baker's yeast)).